Consider the following 251-residue polypeptide: Eukaryotic translation initiation factor 3 subunit K (251 aa).

The region spanning 46 to 224 (FDCYANLALL…VKVPTNKENE (179 aa)) is the PCI domain.

The protein belongs to the eIF-3 subunit K family. As to quaternary structure, component of the eukaryotic translation initiation factor 3 (eIF-3) complex.

It is found in the cytoplasm. Component of the eukaryotic translation initiation factor 3 (eIF-3) complex, which is involved in protein synthesis of a specialized repertoire of mRNAs and, together with other initiation factors, stimulates binding of mRNA and methionyl-tRNAi to the 40S ribosome. The eIF-3 complex specifically targets and initiates translation of a subset of mRNAs involved in cell proliferation. This chain is Eukaryotic translation initiation factor 3 subunit K, found in Aspergillus oryzae (strain ATCC 42149 / RIB 40) (Yellow koji mold).